Reading from the N-terminus, the 331-residue chain is Ribose operon repressor (331 aa).

Residues 1–56 form the HTH lacI-type domain; it reads MTTIRDVAKHAKVSVATVSRVLNKKGYVSKEAEEAVLQAIKELNYQPSSVARSLYH. Positions 4 to 23 form a DNA-binding region, H-T-H motif; it reads IRDVAKHAKVSVATVSRVLN.

In terms of biological role, transcriptional repressor for the ribose rbsDACBK operon. The chain is Ribose operon repressor (rbsR) from Halalkalibacterium halodurans (strain ATCC BAA-125 / DSM 18197 / FERM 7344 / JCM 9153 / C-125) (Bacillus halodurans).